Reading from the N-terminus, the 120-residue chain is uncharacterized protein (120 aa).

A run of 3 helical transmembrane segments spans residues 24-44, 61-81, and 86-106; these read ALLG…ALCY, IGVV…NLAV, and PLGK…GIVV.

This sequence to M.leprae ML1176.

The protein localises to the cell membrane. This is an uncharacterized protein from Mycobacterium bovis (strain ATCC BAA-935 / AF2122/97).